Consider the following 112-residue polypeptide: Putative pterin-4-alpha-carbinolamine dehydratase (112 aa).

It belongs to the pterin-4-alpha-carbinolamine dehydratase family.

The catalysed reaction is (4aS,6R)-4a-hydroxy-L-erythro-5,6,7,8-tetrahydrobiopterin = (6R)-L-erythro-6,7-dihydrobiopterin + H2O. This is Putative pterin-4-alpha-carbinolamine dehydratase from Shewanella oneidensis (strain ATCC 700550 / JCM 31522 / CIP 106686 / LMG 19005 / NCIMB 14063 / MR-1).